The primary structure comprises 420 residues: ATP phosphoribosyltransferase regulatory subunit (420 aa).

The protein belongs to the class-II aminoacyl-tRNA synthetase family. HisZ subfamily. Heteromultimer composed of HisG and HisZ subunits.

The protein localises to the cytoplasm. Its pathway is amino-acid biosynthesis; L-histidine biosynthesis; L-histidine from 5-phospho-alpha-D-ribose 1-diphosphate: step 1/9. Required for the first step of histidine biosynthesis. May allow the feedback regulation of ATP phosphoribosyltransferase activity by histidine. This Bacillus cereus (strain ATCC 10987 / NRS 248) protein is ATP phosphoribosyltransferase regulatory subunit.